The chain runs to 404 residues: Phosphopentomutase (404 aa).

Mn(2+) contacts are provided by D10, D303, H308, D344, H345, and H356.

Belongs to the phosphopentomutase family. The cofactor is Mn(2+).

It localises to the cytoplasm. The catalysed reaction is 2-deoxy-alpha-D-ribose 1-phosphate = 2-deoxy-D-ribose 5-phosphate. The enzyme catalyses alpha-D-ribose 1-phosphate = D-ribose 5-phosphate. The protein operates within carbohydrate degradation; 2-deoxy-D-ribose 1-phosphate degradation; D-glyceraldehyde 3-phosphate and acetaldehyde from 2-deoxy-alpha-D-ribose 1-phosphate: step 1/2. Its function is as follows. Isomerase that catalyzes the conversion of deoxy-ribose 1-phosphate (dRib-1-P) and ribose 1-phosphate (Rib-1-P) to deoxy-ribose 5-phosphate (dRib-5-P) and ribose 5-phosphate (Rib-5-P), respectively. The sequence is that of Phosphopentomutase from Shewanella baltica (strain OS155 / ATCC BAA-1091).